The sequence spans 112 residues: Small ribosomal subunit protein uS17 (112 aa).

It belongs to the universal ribosomal protein uS17 family. As to quaternary structure, part of the 30S ribosomal subunit.

Functionally, one of the primary rRNA binding proteins, it binds specifically to the 5'-end of 16S ribosomal RNA. This is Small ribosomal subunit protein uS17 from Haloarcula marismortui (strain ATCC 43049 / DSM 3752 / JCM 8966 / VKM B-1809) (Halobacterium marismortui).